A 147-amino-acid polypeptide reads, in one-letter code: MDTLAAIGRWLSKQHVVTWCVSREDELWCANAFYVYDPDTVAFYLLSEEHTRHGQMTGQRAKVAGTVNGQPKTVALIRGVQFKGEIRRLSGDEEARMRQRYVKRFPVARMLSAPVWEIRPDEIKFTDNTLGFGKKLHWRRDAGAEQA.

The protein belongs to the UPF0306 family.

The sequence is that of UPF0306 protein KPN78578_35330 from Klebsiella pneumoniae subsp. pneumoniae (strain ATCC 700721 / MGH 78578).